Consider the following 557-residue polypeptide: Arginine--tRNA ligase (557 aa).

The short motif at 132–142 (ANPTGDLHLGH) is the 'HIGH' region element.

The protein belongs to the class-I aminoacyl-tRNA synthetase family. As to quaternary structure, monomer.

It is found in the cytoplasm. The enzyme catalyses tRNA(Arg) + L-arginine + ATP = L-arginyl-tRNA(Arg) + AMP + diphosphate. The sequence is that of Arginine--tRNA ligase from Bacillus pumilus (strain SAFR-032).